The following is a 358-amino-acid chain: tRNA (guanine-N(7)-)-methyltransferase (358 aa).

The interval 1 to 29 (MTPPPPKRQKRDEYRKATAEATSQSGASD) is disordered. S-adenosyl-L-methionine is bound by residues Gly-99 and 122–123 (EI). A compositionally biased stretch (low complexity) spans 151–186 (TATAASETPSQQQAQIDGKQANANAAADAASPAPST). Residues 151–194 (TATAASETPSQQQAQIDGKQANANAAADAASPAPSTDTEHMPTT) form a disordered region. Residues 209-210 (NT) and Cys-229 each bind S-adenosyl-L-methionine. Asp-232 is an active-site residue. S-adenosyl-L-methionine is bound at residue 330–332 (TEE).

The protein belongs to the class I-like SAM-binding methyltransferase superfamily. TrmB family. As to quaternary structure, forms a complex with trm82.

The protein localises to the nucleus. The enzyme catalyses guanosine(46) in tRNA + S-adenosyl-L-methionine = N(7)-methylguanosine(46) in tRNA + S-adenosyl-L-homocysteine. It participates in tRNA modification; N(7)-methylguanine-tRNA biosynthesis. Its function is as follows. Catalyzes the formation of N(7)-methylguanine at position 46 (m7G46) in tRNA. This chain is tRNA (guanine-N(7)-)-methyltransferase (trm8), found in Aspergillus fumigatus (strain CBS 144.89 / FGSC A1163 / CEA10) (Neosartorya fumigata).